The chain runs to 135 residues: Small ribosomal subunit protein uS12 (135 aa).

Aspartate 89 is subject to 3-methylthioaspartic acid. The disordered stretch occupies residues 103–135 (DTAGVKNRMQSRSKYGTKRPKPGQAAAPAGKKR). Over residues 111–123 (MQSRSKYGTKRPK) the composition is skewed to basic residues. The span at 124-135 (PGQAAAPAGKKR) shows a compositional bias: low complexity.

Belongs to the universal ribosomal protein uS12 family. Part of the 30S ribosomal subunit. Contacts proteins S8 and S17. May interact with IF1 in the 30S initiation complex.

Functionally, with S4 and S5 plays an important role in translational accuracy. Interacts with and stabilizes bases of the 16S rRNA that are involved in tRNA selection in the A site and with the mRNA backbone. Located at the interface of the 30S and 50S subunits, it traverses the body of the 30S subunit contacting proteins on the other side and probably holding the rRNA structure together. The combined cluster of proteins S8, S12 and S17 appears to hold together the shoulder and platform of the 30S subunit. This Gloeobacter violaceus (strain ATCC 29082 / PCC 7421) protein is Small ribosomal subunit protein uS12.